The primary structure comprises 747 residues: Myotubularin-related protein 12 (747 aa).

A Myotubularin phosphatase domain is found at Phe205–Tyr643. The interaction with MTM1 stretch occupies residues Val449–Lys558. The tract at residues Asp548–Lys575 is disordered. Positions Gln562 to Ser572 are enriched in polar residues. Residues Ser564 and Ser601 each carry the phosphoserine modification.

The protein belongs to the protein-tyrosine phosphatase family. Non-receptor class myotubularin subfamily. Heterodimer with lipid phosphatase MTM1. Heterodimer with lipid phosphatase MTMR2. In terms of tissue distribution, expressed in skeletal muscles (at protein level).

The protein resides in the cytoplasm. It localises to the sarcoplasmic reticulum. The protein localises to the myofibril. It is found in the sarcomere. In terms of biological role, acts as an adapter for the myotubularin-related phosphatases. Regulates phosphatase MTM1 protein stability and possibly its intracellular location. By stabilizing MTM1 protein levels, required for skeletal muscle maintenance but not for myogenesis. The sequence is that of Myotubularin-related protein 12 (Mtmr12) from Mus musculus (Mouse).